The chain runs to 2190 residues: Highly-reducing polyketide synthase 1 (2190 aa).

The region spanning 6-431 is the Ketosynthase family 3 (KS3) domain; the sequence is LTPVAIVGYA…GANAHVVLGA (426 aa). Residues C179, H315, and H355 each act as for beta-ketoacyl synthase activity in the active site. The Malonyl-CoA:ACP transacylase (MAT) domain occupies 541–857; sequence FVFTGQGAQW…VSVLARGQNA (317 aa). The tract at residues 925–1061 is N-terminal hotdog fold; that stretch reads NDLLGSLADW…GLVGVRNSPA (137 aa). In terms of domain architecture, PKS/mFAS DH spans 925 to 1246; sequence NDLLGSLADW…MTPLRESSGS (322 aa). Residue H957 is the Proton acceptor; for dehydratase activity of the active site. A C-terminal hotdog fold region spans residues 1089–1246; that stretch reads TETVDVQAMY…MTPLRESSGS (158 aa). The active-site Proton donor; for dehydratase activity is D1154. Residues 1494–1804 form the Enoyl reductase (ER) domain; it reads GSLDSFYFVD…SGKSMGKLVI (311 aa). The 178-residue stretch at 1828–2005 folds into the Ketoreductase (KR) domain; the sequence is ASYLIVGGTG…GTSLDLTAVS (178 aa). One can recognise a Carrier domain in the interval 2107 to 2184; the sequence is KALEVLYGAL…ELAKLISKKS (78 aa). Residue S2144 is modified to O-(pantetheine 4'-phosphoryl)serine.

Requires pantetheine 4'-phosphate as cofactor.

Functionally, highly-reducing polyketide synthase; part of the gene cluster that mediates the biosynthesis of liamocins, glycolipids (also called heavy oils) composed of a single mannitol or arabitol headgroup linked to either three, four or even six 3,5-dihydroxydecanoic ester tail-groups. Within the pathway, PKS1 is responsible for biosynthesis of 3,5-dihydroxydecanoic acid from acetyl-CoA and malonyl-CoA. A phosphopantetheine transferase (PPTase) activates the HR-PKS. The esterase EST1 then catalyzes ester bond formation between 3,5-dihydroxydecanoic acid and mannitol (provided by the mannitol-1-phosphate 5-dehydrogenase and the NADP-dependent mannitol dehydrogenase) or arabinol (provided by the L-arabinitol 4-dehydrogenase). In Aureobasidium melanogenum (Aureobasidium pullulans var. melanogenum), this protein is Highly-reducing polyketide synthase 1.